Consider the following 67-residue polypeptide: Ayadualin (67 aa).

The signal sequence occupies residues 1-20 (MNKIILFSAVFLALVFCAEA). Residues 35-54 (PDDTVDIDEGLPDAFDEDYE) are compositionally biased toward acidic residues. A disordered region spans residues 35-67 (PDDTVDIDEGLPDAFDEDYEQDGHNPYPCRGDC). The Integrin-binding motif signature appears at 64-66 (RGD).

In terms of tissue distribution, salivary gland.

Its subcellular location is the secreted. In terms of biological role, inhibits collagen- and ADP-induced host platelet aggregation by blocking the binding of host integrin alpha-IIb/beta-3 (ITGA2B/ITGB3) to fibrinogen. Inhibits the intrinsic blood coagulation pathway in the host by blocking the activity of host coagulation factor XIIa (F12). The sequence is that of Ayadualin from Lutzomyia ayacuchensis (Sand fly).